The chain runs to 90 residues: Sec-independent protein translocase protein TatA (90 aa).

A helical transmembrane segment spans residues 1–21 (MGGASIWHWIVVGVIVMLLFG). The tract at residues 42–90 (GMADEDQPQAPVANQSPPPVSATEPVRTLPPHQGEPAPAANASVDRKVG) is disordered.

It belongs to the TatA/E family. The Tat system comprises two distinct complexes: a TatABC complex, containing multiple copies of TatA, TatB and TatC subunits, and a separate TatA complex, containing only TatA subunits. Substrates initially bind to the TatABC complex, which probably triggers association of the separate TatA complex to form the active translocon.

It localises to the cell inner membrane. Part of the twin-arginine translocation (Tat) system that transports large folded proteins containing a characteristic twin-arginine motif in their signal peptide across membranes. TatA could form the protein-conducting channel of the Tat system. The sequence is that of Sec-independent protein translocase protein TatA from Methylobacterium nodulans (strain LMG 21967 / CNCM I-2342 / ORS 2060).